A 434-amino-acid polypeptide reads, in one-letter code: Nicotinate phosphoribosyltransferase (434 aa).

Residue histidine 242 is modified to Phosphohistidine; by autocatalysis.

The protein belongs to the NAPRTase family. Post-translationally, transiently phosphorylated on a His residue during the reaction cycle. Phosphorylation strongly increases the affinity for substrates and increases the rate of nicotinate D-ribonucleotide production. Dephosphorylation regenerates the low-affinity form of the enzyme, leading to product release.

It catalyses the reaction nicotinate + 5-phospho-alpha-D-ribose 1-diphosphate + ATP + H2O = nicotinate beta-D-ribonucleotide + ADP + phosphate + diphosphate. It participates in cofactor biosynthesis; NAD(+) biosynthesis; nicotinate D-ribonucleotide from nicotinate: step 1/1. In terms of biological role, catalyzes the synthesis of beta-nicotinate D-ribonucleotide from nicotinate and 5-phospho-D-ribose 1-phosphate at the expense of ATP. The chain is Nicotinate phosphoribosyltransferase from Sinorhizobium fredii (strain NBRC 101917 / NGR234).